We begin with the raw amino-acid sequence, 166 residues long: MSEAIIAKKAELVDAVAEKMKAAASIVVVDARGLTVEQDTVLRRELRGSEVEYKVIKNSILRRAAEKAGLEDLASIFVGPSAVAFSNEDVVAPAKILNDFAKNADALEIKGGAIEGAVASKEEILALATLPNREGLLSMLLSVLQAPVRNVALAVKAVADNKEDAA.

The protein belongs to the universal ribosomal protein uL10 family. In terms of assembly, part of the ribosomal stalk of the 50S ribosomal subunit. The N-terminus interacts with L11 and the large rRNA to form the base of the stalk. The C-terminus forms an elongated spine to which L12 dimers bind in a sequential fashion forming a multimeric L10(L12)X complex.

Forms part of the ribosomal stalk, playing a central role in the interaction of the ribosome with GTP-bound translation factors. In Streptococcus sanguinis (strain SK36), this protein is Large ribosomal subunit protein uL10.